A 22-amino-acid polypeptide reads, in one-letter code: Phospholipase A2 (22 aa).

It belongs to the phospholipase A2 family. It depends on Ca(2+) as a cofactor.

It is found in the secreted. It catalyses the reaction a 1,2-diacyl-sn-glycero-3-phosphocholine + H2O = a 1-acyl-sn-glycero-3-phosphocholine + a fatty acid + H(+). In terms of biological role, PA2 catalyzes the calcium-dependent hydrolysis of the 2-acyl groups in 3-sn-phosphoglycerides. The protein is Phospholipase A2 of Struthio camelus (Common ostrich).